We begin with the raw amino-acid sequence, 600 residues long: Sulfite reductase [NADPH] flavoprotein alpha-component (600 aa).

The 139-residue stretch at 63–201 (ITLISASQTG…AAQAWRQRVV (139 aa)) folds into the Flavodoxin-like domain. FMN contacts are provided by residues 69-74 (SQTGNA), 116-119 (STQG), and 152-161 (LGDTSYEHFC). The FAD-binding FR-type domain occupies 235–449 (ESPLTATLSV…IEHNDNFRLP (215 aa)). Residues threonine 323, alanine 357, 387 to 390 (RLYS), 405 to 407 (TVG), and 420 to 423 (GGAS) contribute to the FAD site. Residues 520-521 (SR), 526-530 (KIYVQ), and aspartate 562 contribute to the NADP(+) site. An FAD-binding site is contributed by tyrosine 600.

This sequence belongs to the NADPH-dependent sulphite reductase flavoprotein subunit CysJ family. In the N-terminal section; belongs to the flavodoxin family. It in the C-terminal section; belongs to the flavoprotein pyridine nucleotide cytochrome reductase family. Alpha(8)-beta(8). The alpha component is a flavoprotein, the beta component is a hemoprotein. FAD serves as cofactor. FMN is required as a cofactor.

It catalyses the reaction hydrogen sulfide + 3 NADP(+) + 3 H2O = sulfite + 3 NADPH + 4 H(+). It participates in sulfur metabolism; hydrogen sulfide biosynthesis; hydrogen sulfide from sulfite (NADPH route): step 1/1. In terms of biological role, component of the sulfite reductase complex that catalyzes the 6-electron reduction of sulfite to sulfide. This is one of several activities required for the biosynthesis of L-cysteine from sulfate. The flavoprotein component catalyzes the electron flow from NADPH -&gt; FAD -&gt; FMN to the hemoprotein component. The polypeptide is Sulfite reductase [NADPH] flavoprotein alpha-component (Cronobacter sakazakii (strain ATCC BAA-894) (Enterobacter sakazakii)).